A 129-amino-acid chain; its full sequence is Phosphoribosyl-AMP cyclohydrolase (129 aa).

Asp85 is a Mg(2+) binding site. Position 86 (Cys86) interacts with Zn(2+). Mg(2+) is bound by residues Asp87 and Asp89. The Zn(2+) site is built by Cys102 and Cys109.

The protein belongs to the PRA-CH family. As to quaternary structure, homodimer. Requires Mg(2+) as cofactor. It depends on Zn(2+) as a cofactor.

The protein resides in the cytoplasm. It catalyses the reaction 1-(5-phospho-beta-D-ribosyl)-5'-AMP + H2O = 1-(5-phospho-beta-D-ribosyl)-5-[(5-phospho-beta-D-ribosylamino)methylideneamino]imidazole-4-carboxamide. It functions in the pathway amino-acid biosynthesis; L-histidine biosynthesis; L-histidine from 5-phospho-alpha-D-ribose 1-diphosphate: step 3/9. In terms of biological role, catalyzes the hydrolysis of the adenine ring of phosphoribosyl-AMP. The protein is Phosphoribosyl-AMP cyclohydrolase of Methanococcus maripaludis (strain C6 / ATCC BAA-1332).